The primary structure comprises 216 residues: Sporamin B (216 aa).

Residues 1–21 (MKALALLFVLSLYLLPNPAHS) form the signal peptide.

It belongs to the protease inhibitor I3 (leguminous Kunitz-type inhibitor) family. As to expression, accumulates specifically in tuberous roots and tubers upon tuberization. Sporamin accounts 60 to 80% of the total soluble protein of the organ.

It localises to the vacuole. Functionally, major tuberous root protein. The polypeptide is Sporamin B (GSPO-B1) (Ipomoea batatas (Sweet potato)).